Reading from the N-terminus, the 283-residue chain is Shikimate dehydrogenase (NADP(+)) (283 aa).

Shikimate is bound by residues 16-18 and Thr-63; that span reads SLS. Catalysis depends on Lys-67, which acts as the Proton acceptor. NADP(+) is bound at residue Asp-79. Shikimate is bound by residues Asn-88 and Asp-103. Residues 128-132, Ala-223, and Gly-243 each bind NADP(+); that span reads GAGGA.

The protein belongs to the shikimate dehydrogenase family. Homodimer.

The catalysed reaction is shikimate + NADP(+) = 3-dehydroshikimate + NADPH + H(+). The protein operates within metabolic intermediate biosynthesis; chorismate biosynthesis; chorismate from D-erythrose 4-phosphate and phosphoenolpyruvate: step 4/7. Its function is as follows. Involved in the biosynthesis of the chorismate, which leads to the biosynthesis of aromatic amino acids. Catalyzes the reversible NADPH linked reduction of 3-dehydroshikimate (DHSA) to yield shikimate (SA). The sequence is that of Shikimate dehydrogenase (NADP(+)) from Xanthomonas campestris pv. campestris (strain B100).